A 336-amino-acid polypeptide reads, in one-letter code: tRNA pseudouridine synthase D (336 aa).

D84 functions as the Nucleophile in the catalytic mechanism. One can recognise a TRUD domain in the interval 164 to 298 (GVPNYFGEQR…TPSYRWLVGD (135 aa)).

The protein belongs to the pseudouridine synthase TruD family.

The enzyme catalyses uridine(13) in tRNA = pseudouridine(13) in tRNA. Functionally, responsible for synthesis of pseudouridine from uracil-13 in transfer RNAs. The polypeptide is tRNA pseudouridine synthase D (Cellvibrio japonicus (strain Ueda107) (Pseudomonas fluorescens subsp. cellulosa)).